The sequence spans 687 residues: DnaJ protein ERDJ2A (687 aa).

Topologically, residues Met-1–Ser-8 are lumenal. Residues Ala-9–Val-29 form a helical membrane-spanning segment. At Lys-30 to Asn-65 the chain is on the cytoplasmic side. Residues Phe-66–Tyr-86 traverse the membrane as a helical segment. The Lumenal portion of the chain corresponds to Tyr-87–Gly-190. Asn-90 carries N-linked (GlcNAc...) asparagine glycosylation. In terms of domain architecture, J spans Asp-99 to Gly-164. A helical membrane pass occupies residues Gly-191–Ile-211. Residues Pro-205 to Lys-603 form the SEC63 domain. The Cytoplasmic segment spans residues Tyr-212–Glu-687. The tract at residues Ser-619–Glu-687 is disordered. Over residues Ala-623–Glu-654 the composition is skewed to acidic residues.

In terms of assembly, interacts with OEP61/TPR7. As to expression, expressed in leaves, flower buds and flowers.

The protein resides in the endoplasmic reticulum membrane. Required for integral membrane and secreted preprotein translocation across the endoplasmic reticulum membrane. The chain is DnaJ protein ERDJ2A (ERDJ2A) from Arabidopsis thaliana (Mouse-ear cress).